Reading from the N-terminus, the 146-residue chain is UPF0178 protein R01393 (146 aa).

Belongs to the UPF0178 family.

This chain is UPF0178 protein R01393, found in Rhizobium meliloti (strain 1021) (Ensifer meliloti).